We begin with the raw amino-acid sequence, 218 residues long: Ribosomal RNA small subunit methyltransferase G (218 aa).

S-adenosyl-L-methionine-binding positions include Gly82, Leu87, 133-134 (VE), and Arg147.

It belongs to the methyltransferase superfamily. RNA methyltransferase RsmG family.

The protein localises to the cytoplasm. The catalysed reaction is guanosine(527) in 16S rRNA + S-adenosyl-L-methionine = N(7)-methylguanosine(527) in 16S rRNA + S-adenosyl-L-homocysteine. Functionally, specifically methylates the N7 position of guanine in position 527 of 16S rRNA. This Leptothrix cholodnii (strain ATCC 51168 / LMG 8142 / SP-6) (Leptothrix discophora (strain SP-6)) protein is Ribosomal RNA small subunit methyltransferase G.